We begin with the raw amino-acid sequence, 271 residues long: Ribosomal RNA small subunit methyltransferase A (271 aa).

6 residues coordinate S-adenosyl-L-methionine: Asn-22, Leu-24, Gly-49, Glu-70, Asp-96, and Asn-116.

It belongs to the class I-like SAM-binding methyltransferase superfamily. rRNA adenine N(6)-methyltransferase family. RsmA subfamily.

Its subcellular location is the cytoplasm. The enzyme catalyses adenosine(1518)/adenosine(1519) in 16S rRNA + 4 S-adenosyl-L-methionine = N(6)-dimethyladenosine(1518)/N(6)-dimethyladenosine(1519) in 16S rRNA + 4 S-adenosyl-L-homocysteine + 4 H(+). In terms of biological role, specifically dimethylates two adjacent adenosines (A1518 and A1519) in the loop of a conserved hairpin near the 3'-end of 16S rRNA in the 30S particle. May play a critical role in biogenesis of 30S subunits. The polypeptide is Ribosomal RNA small subunit methyltransferase A (Sphingopyxis alaskensis (strain DSM 13593 / LMG 18877 / RB2256) (Sphingomonas alaskensis)).